A 314-amino-acid polypeptide reads, in one-letter code: Methionyl-tRNA formyltransferase (314 aa).

(6S)-5,6,7,8-tetrahydrofolate is bound at residue 111 to 114 (SLLP).

Belongs to the Fmt family.

It carries out the reaction L-methionyl-tRNA(fMet) + (6R)-10-formyltetrahydrofolate = N-formyl-L-methionyl-tRNA(fMet) + (6S)-5,6,7,8-tetrahydrofolate + H(+). Functionally, attaches a formyl group to the free amino group of methionyl-tRNA(fMet). The formyl group appears to play a dual role in the initiator identity of N-formylmethionyl-tRNA by promoting its recognition by IF2 and preventing the misappropriation of this tRNA by the elongation apparatus. The protein is Methionyl-tRNA formyltransferase of Nitrobacter winogradskyi (strain ATCC 25391 / DSM 10237 / CIP 104748 / NCIMB 11846 / Nb-255).